We begin with the raw amino-acid sequence, 129 residues long: Histone H2A (129 aa).

The protein belongs to the histone H2A family. The nucleosome is a histone octamer containing two molecules each of H2A, H2B, H3 and H4 assembled in one H3-H4 heterotetramer and two H2A-H2B heterodimers. The octamer wraps approximately 147 bp of DNA.

The protein localises to the nucleus. The protein resides in the chromosome. In terms of biological role, core component of nucleosome. Nucleosomes wrap and compact DNA into chromatin, limiting DNA accessibility to the cellular machineries which require DNA as a template. Histones thereby play a central role in transcription regulation, DNA repair, DNA replication and chromosomal stability. DNA accessibility is regulated via a complex set of post-translational modifications of histones, also called histone code, and nucleosome remodeling. The chain is Histone H2A (H2A-II) from Chlamydomonas reinhardtii (Chlamydomonas smithii).